The sequence spans 842 residues: Elongation factor 2 (842 aa).

Residues 17–253 (TNVRNMSVIA…LWGDSYFNPK (237 aa)) form the tr-type G domain. GTP contacts are provided by residues 26-33 (AHVDHGKS), 158-161 (NKVD), and 213-215 (SGL). A Diphthamide modification is found at histidine 699.

This sequence belongs to the TRAFAC class translation factor GTPase superfamily. Classic translation factor GTPase family. EF-G/EF-2 subfamily.

It localises to the cytoplasm. It carries out the reaction GTP + H2O = GDP + phosphate + H(+). Catalyzes the GTP-dependent ribosomal translocation step during translation elongation. During this step, the ribosome changes from the pre-translocational (PRE) to the post-translocational (POST) state as the newly formed A-site-bound peptidyl-tRNA and P-site-bound deacylated tRNA move to the P and E sites, respectively. Catalyzes the coordinated movement of the two tRNA molecules, the mRNA and conformational changes in the ribosome. This Komagataella pastoris (Yeast) protein is Elongation factor 2 (EFT1).